A 192-amino-acid chain; its full sequence is Adenylate kinase (192 aa).

10 to 18 contributes to the ATP binding site; it reads GVPGVGGTT.

Belongs to the archaeal adenylate kinase family. As to quaternary structure, monomer.

Its subcellular location is the cytoplasm. It catalyses the reaction AMP + ATP = 2 ADP. This Methanococcus maripaludis (strain C5 / ATCC BAA-1333) protein is Adenylate kinase.